The primary structure comprises 343 residues: Cytoplasmic tRNA 2-thiolation protein 1 (343 aa).

Belongs to the TtcA family. CTU1/NCS6/ATPBD3 subfamily.

The protein localises to the cytoplasm. It participates in tRNA modification; 5-methoxycarbonylmethyl-2-thiouridine-tRNA biosynthesis. In terms of biological role, plays a central role in 2-thiolation of mcm(5)S(2)U at tRNA wobble positions of tRNA(Lys), tRNA(Glu) and tRNA(Gln). Directly binds tRNAs and probably acts by catalyzing adenylation of tRNAs, an intermediate required for 2-thiolation. It is unclear whether it acts as a sulfurtransferase that transfers sulfur from thiocarboxylated URM1 onto the uridine of tRNAs at wobble position. In Drosophila yakuba (Fruit fly), this protein is Cytoplasmic tRNA 2-thiolation protein 1.